The chain runs to 239 residues: tRNA (guanine-N(7)-)-methyltransferase (239 aa).

Glu-69, Glu-94, Asp-121, and Asp-144 together coordinate S-adenosyl-L-methionine. Residue Asp-144 is part of the active site. Lys-148 contributes to the substrate binding site. Residues 150 to 155 (RHNKRR) form an interaction with RNA region. Substrate contacts are provided by residues Asp-180 and 217-220 (TKFE).

This sequence belongs to the class I-like SAM-binding methyltransferase superfamily. TrmB family. In terms of assembly, monomer.

It catalyses the reaction guanosine(46) in tRNA + S-adenosyl-L-methionine = N(7)-methylguanosine(46) in tRNA + S-adenosyl-L-homocysteine. Its pathway is tRNA modification; N(7)-methylguanine-tRNA biosynthesis. Catalyzes the formation of N(7)-methylguanine at position 46 (m7G46) in tRNA. This chain is tRNA (guanine-N(7)-)-methyltransferase, found in Klebsiella pneumoniae subsp. pneumoniae (strain ATCC 700721 / MGH 78578).